The chain runs to 206 residues: ATP phosphoribosyltransferase (206 aa).

Belongs to the ATP phosphoribosyltransferase family. Short subfamily. Heteromultimer composed of HisG and HisZ subunits.

It localises to the cytoplasm. The catalysed reaction is 1-(5-phospho-beta-D-ribosyl)-ATP + diphosphate = 5-phospho-alpha-D-ribose 1-diphosphate + ATP. It functions in the pathway amino-acid biosynthesis; L-histidine biosynthesis; L-histidine from 5-phospho-alpha-D-ribose 1-diphosphate: step 1/9. In terms of biological role, catalyzes the condensation of ATP and 5-phosphoribose 1-diphosphate to form N'-(5'-phosphoribosyl)-ATP (PR-ATP). Has a crucial role in the pathway because the rate of histidine biosynthesis seems to be controlled primarily by regulation of HisG enzymatic activity. This is ATP phosphoribosyltransferase from Campylobacter curvus (strain 525.92).